Here is a 199-residue protein sequence, read N- to C-terminus: Holliday junction branch migration complex subunit RuvA (199 aa).

Positions 1–65 (MIGWLHGQII…EDALLLYGFL (65 aa)) are domain I. A domain II region spans residues 66–144 (DKEERSLFRS…QFDGSVSDTF (79 aa)). Residues 144–148 (FQKQA) form a flexible linker region. The interval 149 to 199 (GSTHSQQEAISALEALGYKPQEAWKVMNKIDNGNKSCEQLIREALQILSSR) is domain III.

It belongs to the RuvA family. Homotetramer. Forms an RuvA(8)-RuvB(12)-Holliday junction (HJ) complex. HJ DNA is sandwiched between 2 RuvA tetramers; dsDNA enters through RuvA and exits via RuvB. An RuvB hexamer assembles on each DNA strand where it exits the tetramer. Each RuvB hexamer is contacted by two RuvA subunits (via domain III) on 2 adjacent RuvB subunits; this complex drives branch migration. In the full resolvosome a probable DNA-RuvA(4)-RuvB(12)-RuvC(2) complex forms which resolves the HJ.

It localises to the cytoplasm. Functionally, the RuvA-RuvB-RuvC complex processes Holliday junction (HJ) DNA during genetic recombination and DNA repair, while the RuvA-RuvB complex plays an important role in the rescue of blocked DNA replication forks via replication fork reversal (RFR). RuvA specifically binds to HJ cruciform DNA, conferring on it an open structure. The RuvB hexamer acts as an ATP-dependent pump, pulling dsDNA into and through the RuvAB complex. HJ branch migration allows RuvC to scan DNA until it finds its consensus sequence, where it cleaves and resolves the cruciform DNA. The chain is Holliday junction branch migration complex subunit RuvA from Legionella pneumophila subsp. pneumophila (strain Philadelphia 1 / ATCC 33152 / DSM 7513).